The primary structure comprises 172 residues: Large ribosomal subunit protein uL10 (172 aa).

The protein belongs to the universal ribosomal protein uL10 family. As to quaternary structure, part of the ribosomal stalk of the 50S ribosomal subunit. The N-terminus interacts with L11 and the large rRNA to form the base of the stalk. The C-terminus forms an elongated spine to which L12 dimers bind in a sequential fashion forming a multimeric L10(L12)X complex.

Forms part of the ribosomal stalk, playing a central role in the interaction of the ribosome with GTP-bound translation factors. The protein is Large ribosomal subunit protein uL10 of Rhizobium meliloti (strain 1021) (Ensifer meliloti).